The chain runs to 375 residues: Beta sliding clamp (375 aa).

It belongs to the beta sliding clamp family. In terms of assembly, forms a ring-shaped head-to-tail homodimer around DNA which binds and tethers DNA polymerases and other proteins to the DNA. The DNA replisome complex has a single clamp-loading complex (3 tau and 1 each of delta, delta', psi and chi subunits) which binds 3 Pol III cores (1 core on the leading strand and 2 on the lagging strand) each with a beta sliding clamp dimer. Additional proteins in the replisome are other copies of gamma, psi and chi, Ssb, DNA helicase and RNA primase.

Its subcellular location is the cytoplasm. Confers DNA tethering and processivity to DNA polymerases and other proteins. Acts as a clamp, forming a ring around DNA (a reaction catalyzed by the clamp-loading complex) which diffuses in an ATP-independent manner freely and bidirectionally along dsDNA. Initially characterized for its ability to contact the catalytic subunit of DNA polymerase III (Pol III), a complex, multichain enzyme responsible for most of the replicative synthesis in bacteria; Pol III exhibits 3'-5' exonuclease proofreading activity. The beta chain is required for initiation of replication as well as for processivity of DNA replication. This Synechococcus elongatus (strain ATCC 33912 / PCC 7942 / FACHB-805) (Anacystis nidulans R2) protein is Beta sliding clamp (dnaN).